A 325-amino-acid polypeptide reads, in one-letter code: CRISPR-associated endonuclease Cas1 2 (325 aa).

Mn(2+)-binding residues include Glu145, His212, and Asp225. Positions 283 to 325 (EEEDPVEEDPTRPGGLWDLEGEVEGGVAYGGDDPGEGAEEPEG) are disordered. A compositionally biased stretch (acidic residues) spans 315–325 (DPGEGAEEPEG).

The protein belongs to the CRISPR-associated endonuclease Cas1 family. Homodimer, forms a heterotetramer with a Cas2 homodimer. Mg(2+) is required as a cofactor. Mn(2+) serves as cofactor.

In terms of biological role, CRISPR (clustered regularly interspaced short palindromic repeat), is an adaptive immune system that provides protection against mobile genetic elements (viruses, transposable elements and conjugative plasmids). CRISPR clusters contain spacers, sequences complementary to antecedent mobile elements, and target invading nucleic acids. CRISPR clusters are transcribed and processed into CRISPR RNA (crRNA). Acts as a dsDNA endonuclease. Involved in the integration of spacer DNA into the CRISPR cassette. In Thermus thermophilus (strain ATCC 27634 / DSM 579 / HB8), this protein is CRISPR-associated endonuclease Cas1 2.